We begin with the raw amino-acid sequence, 351 residues long: GMP reductase (351 aa).

Residue Glu108–Ala131 coordinates NADP(+). Residues Gly181 and Gly183 each contribute to the K(+) site. Cys186 functions as the Thioimidate intermediate in the catalytic mechanism. Ile216–Val239 contacts NADP(+).

The protein belongs to the IMPDH/GMPR family. GuaC type 1 subfamily. In terms of assembly, homotetramer.

The catalysed reaction is IMP + NH4(+) + NADP(+) = GMP + NADPH + 2 H(+). In terms of biological role, catalyzes the irreversible NADPH-dependent deamination of GMP to IMP. It functions in the conversion of nucleobase, nucleoside and nucleotide derivatives of G to A nucleotides, and in maintaining the intracellular balance of A and G nucleotides. The protein is GMP reductase (guaC) of Buchnera aphidicola subsp. Baizongia pistaciae (strain Bp).